A 244-amino-acid polypeptide reads, in one-letter code: Ribosome-inactivating protein cucurmosin (244 aa).

Catalysis depends on residues Tyr70, Tyr109, Glu158, and Arg161. 2 N-linked (GlcNAc...) asparagine glycosylation sites follow: Asn189 and Asn225.

The protein belongs to the ribosome-inactivating protein family. Type 1 RIP subfamily. Post-translationally, the N-linked glycan consists of GlcNAc2Man3Xyl.

The enzyme catalyses Endohydrolysis of the N-glycosidic bond at one specific adenosine on the 28S rRNA.. Its function is as follows. Has cytotoxic activity towards cancer cells, but not normal cells. Inhibits the growth of the human leukemia cell line K562, the murine melanoma cell line B16 and the lung adenocarcinoma cell line A549 with IC(50) values of 88.1 nM, 63.4 nM and 359.3 nM respectively. This chain is Ribosome-inactivating protein cucurmosin, found in Cucurbita moschata (Winter crookneck squash).